The sequence spans 270 residues: Malonyl-[acyl-carrier protein] O-methyltransferase (270 aa).

The protein belongs to the methyltransferase superfamily.

The catalysed reaction is malonyl-[ACP] + S-adenosyl-L-methionine = malonyl-[ACP] methyl ester + S-adenosyl-L-homocysteine. It functions in the pathway cofactor biosynthesis; biotin biosynthesis. Converts the free carboxyl group of a malonyl-thioester to its methyl ester by transfer of a methyl group from S-adenosyl-L-methionine (SAM). It allows to synthesize pimeloyl-ACP via the fatty acid synthetic pathway. The polypeptide is Malonyl-[acyl-carrier protein] O-methyltransferase (Magnetococcus marinus (strain ATCC BAA-1437 / JCM 17883 / MC-1)).